We begin with the raw amino-acid sequence, 282 residues long: PTS system sorbose-specific EIID component (282 aa).

Positions 13–281 (TKITKGDMFK…GIVGYWLGIL (269 aa)) constitute a PTS EIID domain. 4 helical membrane-spanning segments follow: residues 135–155 (LGASLALQGSWLGPILFFVAF), 197–217 (GLFIMGILVTKWTTINVPLVV), 234–254 (ILDQFCPGLLALGWTLLCMYL), and 261–281 (PILLIFALFGVGIVGYWLGIL).

It localises to the cell membrane. The phosphoenolpyruvate-dependent sugar phosphotransferase system (PTS), a major carbohydrate active transport system, catalyzes the phosphorylation of incoming sugar substrates concomitant with their translocation across the cell membrane. The enzyme II SorABCD PTS system is involved in L-sorbose transport. The polypeptide is PTS system sorbose-specific EIID component (Lacticaseibacillus casei (Lactobacillus casei)).